Reading from the N-terminus, the 377-residue chain is Dehydrogenase/reductase SDR family member 13 (377 aa).

The signal sequence occupies residues 1 to 25 (MEALLLGAGLLLGAYVLVYYNLVKA). Serine 46 and isoleucine 48 together coordinate NAD(+). Serine 170 lines the substrate pocket. Tyrosine 197, lysine 201, and serine 232 together coordinate NAD(+). Residue tyrosine 197 is the Proton acceptor of the active site. The tract at residues 309–377 (RLAGLGPGED…AKVEPEIQLS (69 aa)) is disordered. Residues 317–331 (EDAEPDEDPQSEDSE) are compositionally biased toward acidic residues. The segment covering 347–357 (SQPYPSPQSSP) has biased composition (low complexity). Basic and acidic residues predominate over residues 368–377 (AKVEPEIQLS).

This sequence belongs to the short-chain dehydrogenases/reductases (SDR) family.

The protein resides in the secreted. Its function is as follows. Putative oxidoreductase. The chain is Dehydrogenase/reductase SDR family member 13 from Homo sapiens (Human).